Here is a 153-residue protein sequence, read N- to C-terminus: Aspartate carbamoyltransferase regulatory chain (153 aa).

Residues C109, C114, C138, and C141 each coordinate Zn(2+).

Belongs to the PyrI family. Contains catalytic and regulatory chains. It depends on Zn(2+) as a cofactor.

Its function is as follows. Involved in allosteric regulation of aspartate carbamoyltransferase. This chain is Aspartate carbamoyltransferase regulatory chain, found in Nitrosopumilus maritimus (strain SCM1).